The following is a 229-amino-acid chain: Putative N-acetylmannosamine-6-phosphate 2-epimerase (229 aa).

The protein belongs to the NanE family.

The enzyme catalyses an N-acyl-D-glucosamine 6-phosphate = an N-acyl-D-mannosamine 6-phosphate. Its pathway is amino-sugar metabolism; N-acetylneuraminate degradation; D-fructose 6-phosphate from N-acetylneuraminate: step 3/5. Functionally, converts N-acetylmannosamine-6-phosphate (ManNAc-6-P) to N-acetylglucosamine-6-phosphate (GlcNAc-6-P). This is Putative N-acetylmannosamine-6-phosphate 2-epimerase from Shigella sonnei (strain Ss046).